A 94-amino-acid polypeptide reads, in one-letter code: Integration host factor subunit beta (94 aa).

Belongs to the bacterial histone-like protein family. As to quaternary structure, heterodimer of an alpha and a beta chain.

Functionally, this protein is one of the two subunits of integration host factor, a specific DNA-binding protein that functions in genetic recombination as well as in transcriptional and translational control. The protein is Integration host factor subunit beta (ihfB) of Serratia marcescens.